Reading from the N-terminus, the 759-residue chain is LIM domain and actin-binding protein 1 (759 aa).

Methionine 1 carries the N-acetylmethionine modification. Phosphoserine is present on residues serine 4, serine 15, and serine 55. The tract at residues 78–131 (NPGLGAESHTDSLRNSSTEIRHRADHPPAEVTSHAASGAKADQEEQIHPRSRLR) is disordered. Over residues 96 to 105 (EIRHRADHPP) the composition is skewed to basic and acidic residues. Serine 132 bears the Phosphoserine mark. Basic and acidic residues predominate over residues 146–177 (KDGEDLKDHSTESKKMENCLGESRHEVEKSEI). The disordered stretch occupies residues 146–182 (KDGEDLKDHSTESKKMENCLGESRHEVEKSEISENTD). Residues 164–166 (CLG) carry the Required for interaction with NPC1L1 motif. Residues alanine 183 and serine 225 each carry the phosphoserine modification. Disordered stretches follow at residues 211–264 (ILRA…RLSE) and 323–381 (EKIS…AMKK). Tyrosine 229 is subject to Phosphotyrosine. A phosphoserine mark is found at serine 230 and serine 242. Positions 247-258 (DSEKNESRRNLE) are enriched in basic and acidic residues. A phosphoserine mark is found at serine 263, serine 343, serine 350, serine 362, serine 365, serine 369, and serine 374. Residues 362-376 (SPDSRASSLSESSPP) are compositionally biased toward low complexity. Residues 388 to 448 (ETCVECQKTV…KPHFNQLFKS (61 aa)) enclose the LIM zinc-binding domain. The residue at position 439 (lysine 439) is an N6-succinyllysine. The residue at position 490 (serine 490) is a Phosphoserine. The interval 493–513 (VEDAPIAKVGVLAASMEAKAS) is required for interaction with MYO5B. The disordered stretch occupies residues 509-709 (EAKASSQQEK…QEPKSLNWSS (201 aa)). Composition is skewed to basic and acidic residues over residues 516 to 527 (QEKEDKPAETKK) and 556 to 567 (WPPEDEISKPEV). Positions 595–607 (ASFQSTSVKSPKT) are enriched in polar residues. Serine 601, serine 604, serine 609, and serine 617 each carry phosphoserine. The segment covering 644 to 655 (KNGNVGKTTWQN) has biased composition (polar residues). The segment covering 656 to 673 (KESKGETGKRSKEGHSLE) has biased composition (basic and acidic residues). Positions 674–691 (MENENLVENGADSDEDDN) are enriched in acidic residues. Phosphoserine occurs at positions 686, 692, 698, 726, and 741. Residues 693–709 (FLKQQSPQEPKSLNWSS) are compositionally biased toward polar residues.

As to quaternary structure, interacts with NPC1L1; bridges NPC1L1 with MYO5B. Interacts with MYO5B; bridges NPC1L1 with MYO5B. Interacts with PXN; this complex stabilizes actin dynamics. Interacts with F-actin and G-actin. Interacts with LUZP1 (via C-terminus); both proteins restrict ciliation and may work together to regulate this process. Binds RAB40B (GTP-bound); interaction influences LIMA1 subcellular localization in lamellipodia during cell migration. Ubiquitinated by the ECS(RAB40B) complex leading to its degradation. In terms of processing, phosphorylation of the C-terminal region by MAPK1/MAPK3 reduces its association with F-actin and contributes to actin filament reorganization and enhances cell motility. As to expression, highly expressed in placenta, kidney, pancreas, prostate, ovary, spleen and heart. Also detected in lung, liver, brain, skeletal muscle, thymus, testis and intestine. Not detected in leukocytes. Isoform Beta expressed generally at very low levels. Isoform Alpha abundant in epithelial cells from mammary gland, prostate and in normal oral keratinocytes. Low levels in aortic endothelial cells and dermal fibroblasts. Not detectable in myocardium.

The protein localises to the cytoplasm. Its subcellular location is the cell junction. It localises to the focal adhesion. The protein resides in the cytoskeleton. It is found in the stress fiber. The protein localises to the cell membrane. Its subcellular location is the cell projection. It localises to the ruffle. The protein resides in the lamellipodium. Functionally, actin-binding protein involved in actin cytoskeleton regulation and dynamics. Increases the number and size of actin stress fibers and inhibits membrane ruffling. Inhibits actin filament depolymerization. Bundles actin filaments, delays filament nucleation and reduces formation of branched filaments. Acts as a negative regulator of primary cilium formation. Plays a role in cholesterol homeostasis. Influences plasma cholesterol levels through regulation of intestinal cholesterol absorption. May act as a scaffold protein by regulating NPC1L1 transportation, an essential protein for cholesterol absorption, to the plasma membrane by recruiting MYO5B to NPC1L1, and thus facilitates cholesterol uptake. The polypeptide is LIM domain and actin-binding protein 1 (Homo sapiens (Human)).